Consider the following 341-residue polypeptide: Serine/threonine-protein kinase PDIK1L (341 aa).

The region spanning 8 to 334 (YDLIREVGRG…LELRLVQIAF (327 aa)) is the Protein kinase domain. ATP-binding positions include 14–22 (VGRGSYGVV) and K37. Residue D164 is the Proton acceptor of the active site.

The protein belongs to the protein kinase superfamily. Ser/Thr protein kinase family.

Its subcellular location is the nucleus. It carries out the reaction L-seryl-[protein] + ATP = O-phospho-L-seryl-[protein] + ADP + H(+). It catalyses the reaction L-threonyl-[protein] + ATP = O-phospho-L-threonyl-[protein] + ADP + H(+). The protein is Serine/threonine-protein kinase PDIK1L (Pdik1l) of Mus musculus (Mouse).